Consider the following 147-residue polypeptide: Transthyretin (147 aa).

An N-terminal signal peptide occupies residues 1-20 (MASFRLFLLCLAGLVFVSEA). Position 30 is a sulfocysteine (Cys30). Residue Lys35 participates in L-thyroxine binding. At Glu62 the chain carries 4-carboxyglutamate. Position 72 is a phosphoserine (Ser72). Glu74 contacts L-thyroxine. Asn118 is a glycosylation site (N-linked (GlcNAc...) asparagine). Residue Ser137 coordinates L-thyroxine.

The protein belongs to the transthyretin family. In terms of assembly, homotetramer. Dimer of dimers. In the homotetramer, subunits assemble around a central channel that can accommodate two ligand molecules. Interacts with RBP4. Sulfonation of the reactive cysteine Cys-30 enhances the stability of the native conformation of TTR, avoiding misassembly of the protein leading to amyloid formation. As to expression, detected in serum (at protein level).

It localises to the secreted. Functionally, thyroid hormone-binding protein. Probably transports thyroxine from the bloodstream to the brain. The polypeptide is Transthyretin (TTR) (Bos taurus (Bovine)).